We begin with the raw amino-acid sequence, 387 residues long: 3-ketoacyl-CoA thiolase (387 aa).

C91 functions as the Acyl-thioester intermediate in the catalytic mechanism. Residues H343 and C373 each act as proton acceptor in the active site.

It belongs to the thiolase-like superfamily. Thiolase family. As to quaternary structure, heterotetramer of two alpha chains (FadB) and two beta chains (FadA).

Its subcellular location is the cytoplasm. It carries out the reaction an acyl-CoA + acetyl-CoA = a 3-oxoacyl-CoA + CoA. It functions in the pathway lipid metabolism; fatty acid beta-oxidation. In terms of biological role, catalyzes the final step of fatty acid oxidation in which acetyl-CoA is released and the CoA ester of a fatty acid two carbons shorter is formed. This is 3-ketoacyl-CoA thiolase from Cronobacter sakazakii (strain ATCC BAA-894) (Enterobacter sakazakii).